A 303-amino-acid polypeptide reads, in one-letter code: Mycothiol acetyltransferase (303 aa).

2 consecutive N-acetyltransferase domains span residues 1-150 and 162-303; these read MALL…RPLD and VTIR…QFGR. Glutamate 18 contacts 1D-myo-inositol 2-(L-cysteinylamino)-2-deoxy-alpha-D-glucopyranoside. An acetyl-CoA-binding site is contributed by 77–79; that stretch reads LAV. Positions 189, 229, and 237 each coordinate 1D-myo-inositol 2-(L-cysteinylamino)-2-deoxy-alpha-D-glucopyranoside. Acetyl-CoA contacts are provided by residues 241 to 243 and 248 to 254; these read VGV and QGNGLGR. Tyrosine 275 lines the 1D-myo-inositol 2-(L-cysteinylamino)-2-deoxy-alpha-D-glucopyranoside pocket. Acetyl-CoA is bound at residue 280–285; it reads NTAAIK.

Belongs to the acetyltransferase family. MshD subfamily. In terms of assembly, monomer.

It carries out the reaction 1D-myo-inositol 2-(L-cysteinylamino)-2-deoxy-alpha-D-glucopyranoside + acetyl-CoA = mycothiol + CoA + H(+). In terms of biological role, catalyzes the transfer of acetyl from acetyl-CoA to desacetylmycothiol (Cys-GlcN-Ins) to form mycothiol. The polypeptide is Mycothiol acetyltransferase (Saccharopolyspora erythraea (strain ATCC 11635 / DSM 40517 / JCM 4748 / NBRC 13426 / NCIMB 8594 / NRRL 2338)).